Here is a 217-residue protein sequence, read N- to C-terminus: Fucoxanthin-chlorophyll a-c binding protein A, chloroplastic (217 aa).

The transit peptide at 1–39 directs the protein to the chloroplast; sequence MKSAVMAVACAAAPGLRRPSAFNGAALTTSAKSSSAMKM. 3 consecutive transmembrane segments (helical) span residues 81 to 101, 122 to 142, and 183 to 203; these read IAML…PGML, IPPA…LAVM, and GRAA…NNKP.

This sequence belongs to the fucoxanthin chlorophyll protein family. The LHC complex of chromophytic algae is composed of fucoxanthin, chlorophyll A and C bound non-covalently by fucoxanthin chlorophyll proteins (FCPs). The ratio of pigments in this LHC is; fucoxanthin: chlorophyll C: chlorophyll A; (0.6-1): (0.1-0.3): (1).

It localises to the plastid. The protein resides in the chloroplast thylakoid membrane. Functionally, the light-harvesting complex (LHC) functions as a light receptor, it captures and delivers excitation energy to photosystems with which it is closely associated. Energy is transferred from the carotenoid and chlorophyll C (or B) to chlorophyll A and the photosynthetic reaction centers where it is used to synthesize ATP and reducing power. This Macrocystis pyrifera (Giant kelp) protein is Fucoxanthin-chlorophyll a-c binding protein A, chloroplastic (FCPA).